The primary structure comprises 248 residues: 1-(5-phosphoribosyl)-5-[(5-phosphoribosylamino)methylideneamino] imidazole-4-carboxamide isomerase (248 aa).

The active-site Proton acceptor is the D8. D131 (proton donor) is an active-site residue.

The protein belongs to the HisA/HisF family.

The protein resides in the cytoplasm. It carries out the reaction 1-(5-phospho-beta-D-ribosyl)-5-[(5-phospho-beta-D-ribosylamino)methylideneamino]imidazole-4-carboxamide = 5-[(5-phospho-1-deoxy-D-ribulos-1-ylimino)methylamino]-1-(5-phospho-beta-D-ribosyl)imidazole-4-carboxamide. Its pathway is amino-acid biosynthesis; L-histidine biosynthesis; L-histidine from 5-phospho-alpha-D-ribose 1-diphosphate: step 4/9. The chain is 1-(5-phosphoribosyl)-5-[(5-phosphoribosylamino)methylideneamino] imidazole-4-carboxamide isomerase from Cupriavidus necator (strain ATCC 17699 / DSM 428 / KCTC 22496 / NCIMB 10442 / H16 / Stanier 337) (Ralstonia eutropha).